The following is a 429-amino-acid chain: Palmitoyltransferase SWF1 (429 aa).

At 1-3 (MGT) the chain is on the lumenal side. A helical membrane pass occupies residues 4-24 (IAIIAAVILGISFMTFVAFFG). Residues 25-79 (RLPALRNTPISFLHRLIWIHLPNGILTVDRTLTNGRLTTSLTRLGRHLWYDQHPT) lie on the Cytoplasmic side of the membrane. The helical transmembrane segment at 80-100 (ILIFFFLLLSVGEYLYLPVAW) threads the bilayer. The Lumenal portion of the chain corresponds to 101-112 (PHFSFTHKFFGT). The helical transmembrane segment at 113-133 (IAILCPYIFLYLSAYTDPGVI) threads the bilayer. The Cytoplasmic segment spans residues 134–201 (NAKTHVREMA…CVGANNQRWF (68 aa)). The DHHC domain occupies 156–206 (TSCETCHLLKPARSKHCSICKKCVGRMDHHCIFINNCVGANNQRWFILLLL). Residues 202–222 (ILLLLSTAILTLYGGVLGLVI) traverse the membrane as a helical segment. Residues 223–274 (IRAKIQARFPYWTLMPWWTSTQAWNSGDLDFHRWLLLWSWGLQSGVAMGGVT) are Lumenal-facing. Residues 275-295 (LLALLTTPLVWGLLGYHLWLV) form a helical membrane-spanning segment. At 296–429 (YCGTTTNESM…ERGRNRRRSS (134 aa)) the chain is on the cytoplasmic side. Over residues 408-421 (GRSPVDEREFGRER) the composition is skewed to basic and acidic residues. Residues 408 to 429 (GRSPVDEREFGRERGRNRRRSS) form a disordered region.

Belongs to the DHHC palmitoyltransferase family. SWF1 subfamily.

The protein localises to the endoplasmic reticulum membrane. It catalyses the reaction L-cysteinyl-[protein] + hexadecanoyl-CoA = S-hexadecanoyl-L-cysteinyl-[protein] + CoA. In terms of biological role, palmitoyltransferase that targets several endosomal SNAREs. Palmitoylates the SNAREs at cysteine residues close to the cytoplasmic end of their transmembrane domain. May have a role in the cellular quality control of transmembrane domain-containing proteins. The polypeptide is Palmitoyltransferase SWF1 (swf-1) (Neurospora crassa (strain ATCC 24698 / 74-OR23-1A / CBS 708.71 / DSM 1257 / FGSC 987)).